A 196-amino-acid polypeptide reads, in one-letter code: Protein TEX261 (196 aa).

Transmembrane regions (helical) follow at residues phenylalanine 3 to valine 23, serine 42 to phenylalanine 62, isoleucine 70 to isoleucine 90, phenylalanine 97 to glutamate 117, and valine 125 to serine 145.

Belongs to the SVP26 family.

The protein localises to the membrane. The chain is Protein TEX261 (TEX261) from Homo sapiens (Human).